The chain runs to 284 residues: MDKHTDDRKKNNHWKAEDRKSAATEASETRSGGNYAKELARLQEEIAHLQAWVKKTGARIVIVFEGRDAAGKGGVIKRITERVSPRVFRVVALPAPTDREKTQIYMQRYIQQFPAAGEVVIFDRSWYNRPGVERVMGFCSEKKAKRFLEIAPRFEAAMIESGIVLLKYFLDVSEEEQDRRFRQRINDPLRQWKLSPMDVESYRRWWDYTRAYDEMIRMTDTDDAPWWIVPSDNKKQARVNCIAHILSSIPYERVKFEDPDLGKRQKRPADFEGDTRRRTVPNLF.

Composition is skewed to basic and acidic residues over residues 1–22 (MDKHTDDRKKNNHWKAEDRKSA) and 260–277 (DLGKRQKRPADFEGDTRR). Disordered regions lie at residues 1–32 (MDKHTDDRKKNNHWKAEDRKSAATEASETRSG) and 260–284 (DLGKRQKRPADFEGDTRRRTVPNLF).

The protein belongs to the polyphosphate kinase 2 (PPK2) family. Class I subfamily.

The enzyme catalyses [phosphate](n) + ATP = [phosphate](n+1) + ADP. The catalysed reaction is [phosphate](n) + GTP = [phosphate](n+1) + GDP. Its function is as follows. Uses inorganic polyphosphate (polyP) as a donor to convert ADP to ATP. Can also convert GDP to GTP, with lower efficiency. The protein is ADP-polyphosphate phosphotransferase 3 of Rhizobium meliloti (strain 1021) (Ensifer meliloti).